A 444-amino-acid polypeptide reads, in one-letter code: Coagulation factor VII (444 aa).

An N-terminal signal peptide occupies residues 1-21 (MAPQARGLGLCSLLALQASLA). Positions 22–39 (AVFITQEEAHSVLRRQRR) are excised as a propeptide. The Gla domain occupies 40–84 (ANSFLEELRPGSLERECKEELCSFEEAREVFQSTERTKQFWITYN). Residues Glu45, Glu46, Glu53, Glu55, Glu58, Glu59, Glu64, Glu65, Glu68, and Glu74 each carry the 4-carboxyglutamate modification. Residues Cys56 and Cys61 are joined by a disulfide bond. Residues 85–121 (DGDQCASNPCQNGGSCEDQIQSYICFCLADFEGRNCE) form the EGF-like 1; calcium-binding domain. 9 disulfide bridges follow: Cys89/Cys100, Cys94/Cys109, Cys111/Cys120, Cys130/Cys141, Cys137/Cys151, Cys153/Cys166, Cys174/Cys301, Cys198/Cys203, and Cys217/Cys233. O-linked (Glc...) serine; alternate glycosylation occurs at Ser91. A glycan (O-linked (Xyl...) serine; alternate) is linked at Ser91. O-linked (Fuc) serine glycosylation occurs at Ser99. Asp102 is modified ((3R)-3-hydroxyaspartate). The EGF-like 2 domain maps to 126–167 (DQLICMYENGGCEQYCSDHVGSQRSCRCHEGYTLLPNGVSCT). The 240-residue stretch at 192 to 431 (IVGGKVCPKG…YTEWLSRLMR (240 aa)) folds into the Peptidase S1 domain. Residue Asn211 is glycosylated (N-linked (GlcNAc...) asparagine). His232 serves as the catalytic Charge relay system. An N-linked (GlcNAc...) asparagine glycan is attached at Asn242. Asp281 serves as the catalytic Charge relay system. N-linked (GlcNAc...) asparagine glycosylation is present at Asn306. Cys349 and Cys368 form a disulfide bridge. Asp377 contributes to the substrate binding site. Cys379 and Cys407 form a disulfide bridge. The Charge relay system role is filled by Ser383.

This sequence belongs to the peptidase S1 family. In terms of assembly, heterodimer of a light chain and a heavy chain linked by a disulfide bond. Post-translationally, the vitamin K-dependent, enzymatic carboxylation of some glutamate residues allows the modified protein to bind calcium. In terms of processing, the iron and 2-oxoglutarate dependent 3-hydroxylation of aspartate and asparagine is (R) stereospecific within EGF domains. O-glycosylated. O-fucosylated by POFUT1 on a conserved serine or threonine residue found in the consensus sequence C2-X(4,5)-[S/T]-C3 of EGF domains, where C2 and C3 are the second and third conserved cysteines. Post-translationally, can be either O-glucosylated or O-xylosylated at Ser-91 by POGLUT1. As to expression, plasma.

It localises to the secreted. The catalysed reaction is Selective cleavage of Arg-|-Ile bond in factor X to form factor Xa.. Functionally, initiates the extrinsic pathway of blood coagulation. Serine protease that circulates in the blood in a zymogen form. Factor VII is converted to factor VIIa by factor Xa, factor XIIa, factor IXa, or thrombin by minor proteolysis. In the presence of tissue factor and calcium ions, factor VIIa then converts factor X to factor Xa by limited proteolysis. Factor VIIa also converts factor IX to factor IXa in the presence of tissue factor and calcium. The chain is Coagulation factor VII (F7) from Oryctolagus cuniculus (Rabbit).